A 929-amino-acid polypeptide reads, in one-letter code: Diacylglycerol kinase zeta (929 aa).

Over residues 1 to 14 (MEPRDPSPEARSSD) the composition is skewed to basic and acidic residues. Disordered regions lie at residues 1–46 (MEPR…RRFP) and 59–80 (KSGL…GESE). The segment covering 15–24 (SESASASSSG) has biased composition (low complexity). Basic and acidic residues predominate over residues 25–37 (SERDADPEPDKAP). Phorbol-ester/DAG-type zinc fingers lie at residues 98–153 (HIWF…NFRC) and 173–231 (HHWV…EEPC). The interval 257 to 281 (KASKKKKRASFKRRSSKKGPEEGRW) is disordered. Basic residues predominate over residues 258-273 (ASKKKKRASFKRRSSK). The mediates interaction with RASGRP1 stretch occupies residues 279 to 417 (GRWRPFIIRP…HVEEGNVVQL (139 aa)). The region spanning 292-426 (PLMKPLLVFV…LDRWDLRAEP (135 aa)) is the DAGKc domain. Residues 362–370 (LSTLDQLRL) carry the Nuclear export signal motif. The disordered stretch occupies residues 421–441 (DLRAEPNPEAGPEERDDGATD). Residue serine 706 is modified to Phosphoserine. Residues 760 to 783 (ARPDLPTPTSPLPASPCSPTPGSL) form a disordered region. Residues 764 to 778 (LPTPTSPLPASPCSP) show a composition bias toward pro residues. A Phosphoserine modification is found at serine 782. ANK repeat units lie at residues 823-853 (QSRT…EILD) and 858-887 (NGET…SLMK). A PDZ-binding motif is present at residues 925–929 (QETAV).

The protein belongs to the eukaryotic diacylglycerol kinase family. Interacts (via PDZ-binding motif) with the PDZ domain of the syntrophin SNTG1 and that of SNX27. Interacts with IRS1 in the absence of insulin; insulin stimulation decreases this interaction. Found in a ternary complex with IRS1 and PIP5K1A in the absence of insulin. Interacts with PIP5K1A. Forms a signaling complex with RASGRP1 and HRAS.

The protein resides in the nucleus. It is found in the cytoplasm. It localises to the cytosol. The protein localises to the cell membrane. Its subcellular location is the cell projection. The protein resides in the lamellipodium. The enzyme catalyses a 1,2-diacyl-sn-glycerol + ATP = a 1,2-diacyl-sn-glycero-3-phosphate + ADP + H(+). It catalyses the reaction a 1-O-alkyl-sn-glycerol + ATP = a 1-O-alkyl-sn-glycero-3-phosphate + ADP + H(+). It carries out the reaction 1-O-alkyl-2-acyl-sn-glycerol + ATP = 1-O-alkyl-2-acyl-sn-glycero-3-phosphate + ADP + H(+). The catalysed reaction is 1,2-didecanoyl-sn-glycerol + ATP = 1,2-didecanoyl-sn-glycero-3-phosphate + ADP + H(+). The enzyme catalyses 1,2-ditetradecanoyl-sn-glycerol + ATP = 1,2-ditetradecanoyl-sn-glycero-3-phosphate + ADP + H(+). It catalyses the reaction 1-hexadecanoyl-2-(9Z-octadecenoyl)-sn-glycerol + ATP = 1-hexadecanoyl-2-(9Z-octadecenoyl)-sn-glycero-3-phosphate + ADP + H(+). It carries out the reaction 1-hexadecanoyl-2-(5Z,8Z,11Z,14Z-eicosatetraenoyl)-sn-glycerol + ATP = 1-hexadecanoyl-2-(5Z,8Z,11Z,14Z-eicosatetraenoyl)-sn-glycero-3-phosphate + ADP + H(+). The catalysed reaction is 1-octadecanoyl-2-(9Z-octadecenoyl)-sn-glycerol + ATP = 1-octadecanoyl-2-(9Z-octadecenoyl)-sn-glycero-3-phosphate + ADP + H(+). The enzyme catalyses 1-octadecanoyl-2-(5Z,8Z,11Z,14Z-eicosatetraenoyl)-sn-glycerol + ATP = 1-octadecanoyl-2-(5Z,8Z,11Z,14Z-eicosatetraenoyl)-sn-glycero-3-phosphate + ADP + H(+). It catalyses the reaction 1-octadecanoyl-2-(4Z,7Z,10Z,13Z,16Z,19Z-docosahexaenoyl)-sn-glycerol + ATP = 1-octadecanoyl-2-(4Z,7Z,10Z,13Z,16Z,19Z-docosahexaenoyl)-sn-glycero-3-phosphate + ADP + H(+). It carries out the reaction 1,2-di-(9Z-octadecenoyl)-sn-glycerol + ATP = 1,2-di-(9Z-octadecenoyl)-sn-glycero-3-phosphate + ADP + H(+). The catalysed reaction is 1-(9Z-octadecenoyl)-2-hexadecanoyl-sn-glycerol + ATP = 1-(9Z)-octadecenoyl-2-hexadecanoyl-sn-glycero-3-phosphate + ADP + H(+). The enzyme catalyses 1-eicosanoyl-2-(5Z,8Z,11Z,14Z)-eicosatetraenoyl-sn-glycerol + ATP = 1-eicosanoyl-2-(5Z,8Z,11Z,14Z)-eicosatetraenoyl-sn-glycero-3-phosphate + ADP + H(+). It catalyses the reaction 1,2-di-(5Z,8Z,11Z,14Z)-eicosatetraenoyl-sn-glycerol + ATP = 1,2-di-(5Z,8Z,11Z,14Z)-eicosatetraenoyl-sn-glycero-3-phosphate + ADP + H(+). It carries out the reaction 1-O-hexadecyl-2-acetyl-sn-glycerol + ATP = 1-O-hexadecyl-2-acetyl-sn-glycero-3-phosphate + ADP + H(+). The catalysed reaction is 1-O-hexadecyl-2-(5Z,8Z,11Z,14Z-eicosatetraenoyl)-sn-glycerol + ATP = 1-O-hexadecyl-2-(5Z,8Z,11Z,14Z-eicosatetraenoyl)-sn-glycero-3-phosphate + ADP + H(+). The enzyme catalyses 1-O-hexadecyl-2-(9Z-octadecenoyl)-sn-glycerol + ATP = 1-O-hexadecyl-2-(9Z-octadecenoyl)-sn-glycero-3-phosphate + ADP + H(+). It catalyses the reaction 1-O-hexadecyl-sn-glycerol + ATP = 1-O-hexadecyl-sn-glycero-3-phosphate + ADP + H(+). Its pathway is lipid metabolism; glycerolipid metabolism. Its function is as follows. Diacylglycerol kinase that converts diacylglycerol/DAG into phosphatidic acid/phosphatidate/PA and regulates the respective levels of these two bioactive lipids. Thereby, acts as a central switch between the signaling pathways activated by these second messengers with different cellular targets and opposite effects in numerous biological processes. Also plays an important role in the biosynthesis of complex lipids. Does not exhibit an acyl chain-dependent substrate specificity among diacylglycerol species. Can also phosphorylate 1-alkyl-2-acylglycerol in vitro but less efficiently and with a preference for alkylacylglycerols containing an arachidonoyl group. The biological processes it is involved in include T cell activation since it negatively regulates T-cell receptor signaling which is in part mediated by diacylglycerol. By generating phosphatidic acid, stimulates PIP5KIA activity which regulates actin polymerization. Through the same mechanism could also positively regulate insulin-induced translocation of SLC2A4 to the cell membrane. Regulates RASGRP1 activity. The sequence is that of Diacylglycerol kinase zeta from Rattus norvegicus (Rat).